The chain runs to 69 residues: U5-agatoxin-Ao1a (69 aa).

Residues 1–20 form the signal peptide; it reads MRTIISLLLLSAMVFAVIEA. Positions 21–34 are excised as a propeptide; the sequence is ISLEEGLQLFEGER. Disulfide bonds link cysteine 36/cysteine 52 and cysteine 43/cysteine 57.

This sequence belongs to the neurotoxin 01 (U2-agtx) family. Post-translationally, does not contain a cysteine at position 61 which disrupts the cysteine framework. As to expression, expressed by the venom gland.

The protein resides in the secreted. The protein is U5-agatoxin-Ao1a of Agelena orientalis (Funnel-web spider).